Here is a 202-residue protein sequence, read N- to C-terminus: N-(5'-phosphoribosyl)anthranilate isomerase (202 aa).

Belongs to the TrpF family.

It carries out the reaction N-(5-phospho-beta-D-ribosyl)anthranilate = 1-(2-carboxyphenylamino)-1-deoxy-D-ribulose 5-phosphate. It participates in amino-acid biosynthesis; L-tryptophan biosynthesis; L-tryptophan from chorismate: step 3/5. This is N-(5'-phosphoribosyl)anthranilate isomerase from Listeria monocytogenes serotype 4b (strain F2365).